The sequence spans 180 residues: Large ribosomal subunit protein uL5 (180 aa).

Belongs to the universal ribosomal protein uL5 family. As to quaternary structure, part of the 50S ribosomal subunit; part of the 5S rRNA/L5/L18/L25 subcomplex. Contacts the 5S rRNA and the P site tRNA. Forms a bridge to the 30S subunit in the 70S ribosome.

In terms of biological role, this is one of the proteins that bind and probably mediate the attachment of the 5S RNA into the large ribosomal subunit, where it forms part of the central protuberance. In the 70S ribosome it contacts protein S13 of the 30S subunit (bridge B1b), connecting the 2 subunits; this bridge is implicated in subunit movement. Contacts the P site tRNA; the 5S rRNA and some of its associated proteins might help stabilize positioning of ribosome-bound tRNAs. This Streptococcus equi subsp. equi (strain 4047) protein is Large ribosomal subunit protein uL5.